Here is a 216-residue protein sequence, read N- to C-terminus: Protein ADP-ribose pyrophosphatase ORF38 (216 aa).

Positions 1-177 (MRNAAGLFMI…DYSNYIEFFD (177 aa)) constitute a Nudix hydrolase domain. The short motif at 48–70 (GHRDCCDAKVYETAVREFVEETG) is the Nudix box element.

It localises to the host cytoplasm. It is found in the host nucleus. It carries out the reaction ADP-D-ribose + H2O = D-ribose 5-phosphate + AMP + 2 H(+). Plays an important role in virus replication most probably through its hydrolyzing ADP-ribose activity in host cells. May function in viral DNA replication or transcription directly, or by removing toxic substances or metabolic intermediates. The polypeptide is Protein ADP-ribose pyrophosphatase ORF38 (Lepidoptera (butterflies and moths)).